The following is a 432-amino-acid chain: Adenylosuccinate synthetase (432 aa).

GTP contacts are provided by residues 12–18 (GDEGKGK) and 40–42 (GHT). The Proton acceptor role is filled by Asp13. Mg(2+) is bound by residues Asp13 and Gly40. IMP is bound by residues 13-16 (DEGK), 38-41 (NAGH), Thr129, Arg143, Gln224, Thr239, and Arg303. The active-site Proton donor is the His41. 299-305 (VTTGRRR) is a substrate binding site. Residues Arg305, 331–333 (KLD), and 413–415 (GVG) each bind GTP.

It belongs to the adenylosuccinate synthetase family. In terms of assembly, homodimer. Mg(2+) is required as a cofactor.

The protein resides in the cytoplasm. It carries out the reaction IMP + L-aspartate + GTP = N(6)-(1,2-dicarboxyethyl)-AMP + GDP + phosphate + 2 H(+). It participates in purine metabolism; AMP biosynthesis via de novo pathway; AMP from IMP: step 1/2. Its function is as follows. Plays an important role in the de novo pathway of purine nucleotide biosynthesis. Catalyzes the first committed step in the biosynthesis of AMP from IMP. This chain is Adenylosuccinate synthetase, found in Mycobacterium marinum (strain ATCC BAA-535 / M).